The sequence spans 351 residues: V-type proton ATPase subunit d2 (351 aa).

Belongs to the V-ATPase V0D/AC39 subunit family. As to quaternary structure, V-ATPase is a heteromultimeric enzyme composed of a peripheral catalytic V1 complex (components A to H) attached to an integral membrane V0 proton pore complex (components: a, c, c'', d and e).

It localises to the vacuole membrane. Its function is as follows. Subunit of the integral membrane V0 complex of vacuolar ATPase. Vacuolar ATPase is responsible for acidifying a variety of intracellular compartments in eukaryotic cells, thus providing most of the energy required for transport processes in the vacuolar system. The sequence is that of V-type proton ATPase subunit d2 (VHA-d2) from Arabidopsis thaliana (Mouse-ear cress).